Here is a 170-residue protein sequence, read N- to C-terminus: Endoribonuclease YbeY (170 aa).

Histidine 128, histidine 132, and histidine 138 together coordinate Zn(2+).

The protein belongs to the endoribonuclease YbeY family. Zn(2+) is required as a cofactor.

Its subcellular location is the cytoplasm. Functionally, single strand-specific metallo-endoribonuclease involved in late-stage 70S ribosome quality control and in maturation of the 3' terminus of the 16S rRNA. In Ruegeria sp. (strain TM1040) (Silicibacter sp.), this protein is Endoribonuclease YbeY.